A 217-amino-acid polypeptide reads, in one-letter code: Large ribosomal subunit protein uL3 (217 aa).

Belongs to the universal ribosomal protein uL3 family. Part of the 50S ribosomal subunit. Forms a cluster with proteins L14 and L19.

Its function is as follows. One of the primary rRNA binding proteins, it binds directly near the 3'-end of the 23S rRNA, where it nucleates assembly of the 50S subunit. The sequence is that of Large ribosomal subunit protein uL3 from Mycobacterium leprae (strain TN).